The primary structure comprises 892 residues: Alanine--tRNA ligase (892 aa).

Residues His-580, His-584, Cys-682, and His-686 each contribute to the Zn(2+) site.

The protein belongs to the class-II aminoacyl-tRNA synthetase family. It depends on Zn(2+) as a cofactor.

It localises to the cytoplasm. The catalysed reaction is tRNA(Ala) + L-alanine + ATP = L-alanyl-tRNA(Ala) + AMP + diphosphate. Its function is as follows. Catalyzes the attachment of alanine to tRNA(Ala) in a two-step reaction: alanine is first activated by ATP to form Ala-AMP and then transferred to the acceptor end of tRNA(Ala). Also edits incorrectly charged Ser-tRNA(Ala) and Gly-tRNA(Ala) via its editing domain. The sequence is that of Alanine--tRNA ligase from Salinispora tropica (strain ATCC BAA-916 / DSM 44818 / JCM 13857 / NBRC 105044 / CNB-440).